We begin with the raw amino-acid sequence, 167 residues long: SsrA-binding protein (167 aa).

Over residues 139 to 158 (QNHDKRDAAKDRDWQRDKQR) the composition is skewed to basic and acidic residues. Residues 139–167 (QNHDKRDAAKDRDWQRDKQRVMRRHNRDA) are disordered.

Belongs to the SmpB family.

The protein localises to the cytoplasm. In terms of biological role, required for rescue of stalled ribosomes mediated by trans-translation. Binds to transfer-messenger RNA (tmRNA), required for stable association of tmRNA with ribosomes. tmRNA and SmpB together mimic tRNA shape, replacing the anticodon stem-loop with SmpB. tmRNA is encoded by the ssrA gene; the 2 termini fold to resemble tRNA(Ala) and it encodes a 'tag peptide', a short internal open reading frame. During trans-translation Ala-aminoacylated tmRNA acts like a tRNA, entering the A-site of stalled ribosomes, displacing the stalled mRNA. The ribosome then switches to translate the ORF on the tmRNA; the nascent peptide is terminated with the 'tag peptide' encoded by the tmRNA and targeted for degradation. The ribosome is freed to recommence translation, which seems to be the essential function of trans-translation. This Xanthomonas euvesicatoria pv. vesicatoria (strain 85-10) (Xanthomonas campestris pv. vesicatoria) protein is SsrA-binding protein.